The chain runs to 202 residues: Glycerol-3-phosphate acyltransferase (202 aa).

The next 5 membrane-spanning stretches (helical) occupy residues 3-23 (NLIIYAFIYLLSSIPFGLILA), 87-107 (LLWSVAVLAILGHCFSIYLLF), 118-138 (GAMIVLLPLEVLTAFIVWVVI), 144-164 (ISSLASLAALLAFVVSSFIFN), and 167-187 (LEIHTHAPVFIIAFIIVYKHL).

Belongs to the PlsY family. In terms of assembly, probably interacts with PlsX.

Its subcellular location is the cell inner membrane. It carries out the reaction an acyl phosphate + sn-glycerol 3-phosphate = a 1-acyl-sn-glycero-3-phosphate + phosphate. It participates in lipid metabolism; phospholipid metabolism. Functionally, catalyzes the transfer of an acyl group from acyl-phosphate (acyl-PO(4)) to glycerol-3-phosphate (G3P) to form lysophosphatidic acid (LPA). This enzyme utilizes acyl-phosphate as fatty acyl donor, but not acyl-CoA or acyl-ACP. This Campylobacter jejuni (strain RM1221) protein is Glycerol-3-phosphate acyltransferase.